The chain runs to 1046 residues: Nuclear pore complex protein NUP96 (1046 aa).

In terms of domain architecture, Peptidase S59 spans 51 to 187 (SPDYFLKPCI…GLWKFFVPHF (137 aa)). Polar residues predominate over residues 283–295 (RNVRPSQKIAQRN). The tract at residues 283-304 (RNVRPSQKIAQRNSHQDPPPVV) is disordered. Ser523 carries the post-translational modification Phosphoserine.

In terms of assembly, part of the nuclear pore complex (NPC). The NPC has an eight-fold symmetrical structure comprising a central transport channel and two rings, the cytoplasmic and nuclear rings, to which eight filaments are attached. The cytoplasmic filaments have loose ends, while the nuclear filaments are joined in a distal ring, forming a nuclear basket. NPCs are highly dynamic in configuration and composition, and can be devided in 3 subcomplexes, the NUP62 subcomplex, the NUP107-160 subcomplex and the NUP93 subcomplex, containing approximately 30 different nucleoporin proteins. Expressed in roots, leaves, stems, flowers and siliques.

It localises to the nucleus membrane. The protein localises to the nucleus. Its subcellular location is the nuclear pore complex. In terms of biological role, contributes to the transfer of mature mRNA from the nucleus to the cytosol. Required for both R gene-mediated and basal disease resistance. RNA export seems to play a critical role in stress responses and regulation of plant growth and development. The chain is Nuclear pore complex protein NUP96 from Arabidopsis thaliana (Mouse-ear cress).